The primary structure comprises 180 residues: Translation initiation factor IF-3 (180 aa).

The protein belongs to the IF-3 family. In terms of assembly, monomer.

The protein localises to the cytoplasm. In terms of biological role, IF-3 binds to the 30S ribosomal subunit and shifts the equilibrium between 70S ribosomes and their 50S and 30S subunits in favor of the free subunits, thus enhancing the availability of 30S subunits on which protein synthesis initiation begins. The chain is Translation initiation factor IF-3 from Salmonella paratyphi A (strain ATCC 9150 / SARB42).